A 270-amino-acid polypeptide reads, in one-letter code: Formamidopyrimidine-DNA glycosylase (270 aa).

Pro2 (schiff-base intermediate with DNA) is an active-site residue. Glu3 acts as the Proton donor in catalysis. Residue Lys58 is the Proton donor; for beta-elimination activity of the active site. The DNA site is built by His90, Arg109, and Arg152. The segment at 237-270 (RVYGREGEPCQCGGVVKRIVQGGRSTFFCPRCQK) adopts an FPG-type zinc-finger fold. Arg260 acts as the Proton donor; for delta-elimination activity in catalysis.

It belongs to the FPG family. Monomer. The cofactor is Zn(2+).

It catalyses the reaction Hydrolysis of DNA containing ring-opened 7-methylguanine residues, releasing 2,6-diamino-4-hydroxy-5-(N-methyl)formamidopyrimidine.. It carries out the reaction 2'-deoxyribonucleotide-(2'-deoxyribose 5'-phosphate)-2'-deoxyribonucleotide-DNA = a 3'-end 2'-deoxyribonucleotide-(2,3-dehydro-2,3-deoxyribose 5'-phosphate)-DNA + a 5'-end 5'-phospho-2'-deoxyribonucleoside-DNA + H(+). In terms of biological role, involved in base excision repair of DNA damaged by oxidation or by mutagenic agents. Acts as a DNA glycosylase that recognizes and removes damaged bases. Has a preference for oxidized purines, such as 7,8-dihydro-8-oxoguanine (8-oxoG). Has AP (apurinic/apyrimidinic) lyase activity and introduces nicks in the DNA strand. Cleaves the DNA backbone by beta-delta elimination to generate a single-strand break at the site of the removed base with both 3'- and 5'-phosphates. The sequence is that of Formamidopyrimidine-DNA glycosylase from Novosphingobium aromaticivorans (strain ATCC 700278 / DSM 12444 / CCUG 56034 / CIP 105152 / NBRC 16084 / F199).